We begin with the raw amino-acid sequence, 31 residues long: Maltose/maltodextrin import ATP-binding protein MalK (31 aa).

Belongs to the ABC transporter superfamily. Maltooligosaccharide importer (TC 3.A.1.1.1) family. In terms of assembly, the complex is composed of two ATP-binding proteins (MalK), two transmembrane proteins (MalG and MalK) and a solute-binding protein (MalE).

Its subcellular location is the cell inner membrane. It carries out the reaction D-maltose(out) + ATP + H2O = D-maltose(in) + ADP + phosphate + H(+). Its function is as follows. Part of the ABC transporter complex MalEFGK involved in maltose/maltodextrin import. Responsible for energy coupling to the transport system. In Photorhabdus luminescens (Xenorhabdus luminescens), this protein is Maltose/maltodextrin import ATP-binding protein MalK.